The chain runs to 134 residues: Ribonuclease VapC40 (134 aa).

The region spanning 3–126 is the PINc domain; that stretch reads APDTSVLVAG…LRAVETYERL (124 aa). The Mg(2+) site is built by Asp-5 and Asp-98.

This sequence belongs to the PINc/VapC protein family. Mg(2+) serves as cofactor.

Functionally, toxic component of a type II toxin-antitoxin (TA) system. An RNase. Its cognate antitoxin is VapB40. This Mycobacterium tuberculosis (strain CDC 1551 / Oshkosh) protein is Ribonuclease VapC40.